A 199-amino-acid polypeptide reads, in one-letter code: ATP-dependent Clp protease proteolytic subunit (199 aa).

Serine 97 (nucleophile) is an active-site residue. Residue histidine 122 is part of the active site.

The protein belongs to the peptidase S14 family. As to quaternary structure, fourteen ClpP subunits assemble into 2 heptameric rings which stack back to back to give a disk-like structure with a central cavity, resembling the structure of eukaryotic proteasomes.

The protein resides in the cytoplasm. The enzyme catalyses Hydrolysis of proteins to small peptides in the presence of ATP and magnesium. alpha-casein is the usual test substrate. In the absence of ATP, only oligopeptides shorter than five residues are hydrolyzed (such as succinyl-Leu-Tyr-|-NHMec, and Leu-Tyr-Leu-|-Tyr-Trp, in which cleavage of the -Tyr-|-Leu- and -Tyr-|-Trp bonds also occurs).. Its function is as follows. Cleaves peptides in various proteins in a process that requires ATP hydrolysis. Has a chymotrypsin-like activity. Plays a major role in the degradation of misfolded proteins. This chain is ATP-dependent Clp protease proteolytic subunit, found in Geobacter sulfurreducens (strain ATCC 51573 / DSM 12127 / PCA).